Consider the following 132-residue polypeptide: Riboflavin kinase (132 aa).

10–15 (GLGEGR) is a CDP binding site. The Mg(2+) site is built by Thr-39 and Asn-41. 3 residues coordinate FMN: Thr-95, Tyr-96, and Glu-103. 108 to 111 (MKLR) contributes to the CDP binding site.

As to quaternary structure, monomer. The cofactor is Mg(2+).

The enzyme catalyses riboflavin + CTP = CDP + FMN + H(+). It participates in cofactor biosynthesis; FMN biosynthesis; FMN from riboflavin (CTP route): step 1/1. Catalyzes the CTP-dependent phosphorylation of riboflavin (vitamin B2) to form flavin mononucleotide (FMN). Can also utilize UTP as the phosphate donor, although less efficiently, and it is unclear if ATP and GTP can also serve as substrates or not. This Methanocaldococcus jannaschii (strain ATCC 43067 / DSM 2661 / JAL-1 / JCM 10045 / NBRC 100440) (Methanococcus jannaschii) protein is Riboflavin kinase (ribK).